The sequence spans 487 residues: Iron-sulfur cluster assembly SufBD family protein ycf24 (487 aa).

It belongs to the iron-sulfur cluster assembly SufBD family.

Its subcellular location is the plastid. It is found in the chloroplast. This is Iron-sulfur cluster assembly SufBD family protein ycf24 (ycf24) from Porphyra purpurea (Red seaweed).